Reading from the N-terminus, the 2544-residue chain is DNA polymerase theta (2544 aa).

The span at 1–13 (MSLPRRSRKRRRS) shows a compositional bias: basic residues. Residues 1-57 (MSLPRRSRKRRRSSSGSDTFSGDGDSFVSPQLRCGPVLSPPPGLGRGRRLTGTGTNK) form a disordered region. Residues 14-29 (SSGSDTFSGDGDSFVS) are compositionally biased toward low complexity. ATP-binding positions include Q95 and 114–121 (APTSAGKT). The region spanning 101-285 (LGHVLEGKNL…WLNAELYHTD (185 aa)) is the Helicase ATP-binding domain. The helicase activity stretch occupies residues 101-551 (LGHVLEGKNL…STSQDMQTYA (451 aa)). Positions 215-218 (DELH) match the DEAH box motif. A Helicase C-terminal domain is found at 320 to 551 (GDEDHIVSLC…STSQDMQTYA (232 aa)). Residues 844–890 (DEEEEAAEERRSMRTIWVTGKGLSAREAAALIVEEAKMILQQDLIEM) are interaction with RAD51. Residues 896–955 (PKSPLSSSTHSRTSTSEVKEHTFKSQTKSSHKRLASMGRNSIRASGSNDKPSPDAERGID) are disordered. Over residues 898–911 (SPLSSSTHSRTSTS) the composition is skewed to low complexity. Polar residues predominate over residues 933–945 (GRNSIRASGSNDK). The segment covering 946–955 (PSPDAERGID) has biased composition (basic and acidic residues). An N6-acetyllysine modification is found at K983. Residues 1022 to 1034 (LSFSSEQVNNTLP) are compositionally biased toward polar residues. 2 disordered regions span residues 1022–1058 (LSFS…GMHR) and 1128–1167 (VGHP…ESQL). Residues 1128–1139 (VGHPAAGSSPAA) show a composition bias toward low complexity. A compositionally biased stretch (basic and acidic residues) spans 1140 to 1155 (ARDRRGLAARETEKGN). The residue at position 1265 (S1265) is a Phosphoserine. Disordered stretches follow at residues 1266–1288 (GVQG…SNPA) and 1331–1353 (QNKC…DHVD). 4 positions are modified to phosphoserine: S1438, S1442, S1444, and S1449. The segment at 1478-1501 (FSNPPHPQEDPVMTPTVSEPQGTQ) is disordered. Residues 1492–1501 (PTVSEPQGTQ) show a composition bias toward polar residues. S1511, S1519, S1585, and S1592 each carry phosphoserine. Residues 1557 to 1591 (ECPQGKLVRGDQNEGSPKPKLTETNQDNSFTWSGA) are disordered. A compositionally biased stretch (polar residues) spans 1578 to 1591 (TETNQDNSFTWSGA). Basic and acidic residues-rich tracts occupy residues 1606 to 1616 (VSSPRENEKPK) and 1628 to 1638 (NSKESHEREEI). Residues 1606-1697 (VSSPRENEKP…GLIPPTPVPA (92 aa)) form a disordered region. The span at 1641-1652 (DLGTVQRTSVFP) shows a compositional bias: polar residues. Positions 1656 to 1667 (VKNRTEGLESKA) are enriched in basic and acidic residues. T1710 is modified (phosphothreonine). The DNA polymerase activity stretch occupies residues 2052-2538 (AECESQKHVM…KVKIGASWGE (487 aa)). Loop stretches follow at residues 2097–2132 (KLPP…GRQF) and 2212–2276 (EIKM…VPFP). The span at 2104–2117 (MKTQGSKKTLGSTR) shows a compositional bias: polar residues. The tract at residues 2104–2124 (MKTQGSKKTLGSTRRGNESGR) is disordered. D2284 functions as the For DNA polymerase activity in the catalytic mechanism. Residues D2284 and Y2285 each coordinate Mg(2+). A loop 3 region spans residues 2445–2489 (QLETFRSTFKSHGHRESMLQNDRTGLLPKRKLKGMFCPMRGGFFI). A Mg(2+)-binding site is contributed by D2494.

It belongs to the DNA polymerase type-A family. In terms of assembly, homomultimer; forms homodimers and homotetramers. Interacts with RAD51. Interacts with ORC2 and ORC4. Interacts with RHNO1; interaction takes place during mitosis and promotes POLQ recruitment to DNA damage sites. Interacts (when phosphorylated) with TOPBP1 (via BRCT domains 7 and 8); promoting POLQ recruitment to DNA damage sites. Mg(2+) serves as cofactor. Post-translationally, phosphorylated by PLK1; promoting interaction with TOPBP1 and recruitment to DNA damage sites.

The protein localises to the nucleus. It localises to the chromosome. The catalysed reaction is DNA(n) + a 2'-deoxyribonucleoside 5'-triphosphate = DNA(n+1) + diphosphate. It carries out the reaction ATP + H2O = ADP + phosphate + H(+). Its function is as follows. Low-fidelity DNA polymerase with a helicase activity that promotes microhomology-mediated end-joining (MMEJ), an alternative non-homologous end-joining (NHEJ) machinery required to repair double-strand breaks in DNA during mitosis. MMEJ is an error-prone repair pathway that produces deletions of sequences from the strand being repaired and promotes genomic rearrangements, such as telomere fusions, some of them leading to cellular transformation. MMEJ is required during mitosis to repair persistent double-strand breaks that originate in S-phase. Although error-prone, MMEJ protects against chromosomal instability and tumorigenesis. The polymerase acts by binding directly the 2 ends of resected double-strand breaks, allowing microhomologous sequences in the overhangs to form base pairs. It then extends each strand from the base-paired region using the opposing overhang as a template. Requires partially resected DNA containing 2 to 6 base pairs of microhomology to perform MMEJ. The polymerase lacks proofreading activity and is highly promiscuous: unlike most polymerases, promotes extension of ssDNA and partial ssDNA (pssDNA) substrates. When the ends of a break do not contain terminal microhomology must identify embedded complementary sequences through a scanning step. Also acts as a DNA helicase, promoting dissociation of the replication protein A complex (RPA/RP-A), composed of RPA1, RPA2 and RPA3, from resected double-strand breaks to allow their annealing and subsequent joining by MMEJ. Removal of RPA/RP-A complex proteins prevents RAD51 accumulation at resected ends, thereby inhibiting homology-recombination repair (HR) pathway. Also shows RNA-directed DNA polymerase activity to mediate DNA repair in vitro; however this activity needs additional evidence in vivo. May also have lyase activity. Involved in somatic hypermutation of immunoglobulin genes, a process that requires the activity of DNA polymerases to ultimately introduce mutations at both A/T and C/G base pairs. However, POLQ does not play a major role in somatic hypermutation. POLQ-mediated end joining activity is involved in random integration of exogenous DNA hampers. This Mus musculus (Mouse) protein is DNA polymerase theta.